We begin with the raw amino-acid sequence, 156 residues long: Small ribosomal subunit protein uS7 (156 aa).

The protein belongs to the universal ribosomal protein uS7 family. In terms of assembly, part of the 30S ribosomal subunit. Contacts proteins S9 and S11.

In terms of biological role, one of the primary rRNA binding proteins, it binds directly to 16S rRNA where it nucleates assembly of the head domain of the 30S subunit. Is located at the subunit interface close to the decoding center, probably blocks exit of the E-site tRNA. The protein is Small ribosomal subunit protein uS7 of Phytoplasma australiense.